The following is a 4036-amino-acid chain: Hybrid PKS-NRPS synthetase iliA (4036 aa).

The region spanning 7-439 is the Ketosynthase family 3 (KS3) domain; the sequence is PEPIAVIGSA…GTNAHAIIES (433 aa). Catalysis depends on for beta-ketoacyl synthase activity residues C181, H318, and H359. The malonyl-CoA:ACP transacylase (MAT) domain stretch occupies residues 561–886; that stretch reads IFTGQGAQWP…LKRNGSDVEA (326 aa). The interval 955–1092 is N-terminal hotdog fold; it reads HELLGRRTPD…GDLVVHLGAD (138 aa). The tract at residues 955–1262 is dehydratase (DH) domain; the sequence is HELLGRRTPD…ATNMVGEQDA (308 aa). The 309-residue stretch at 955 to 1263 folds into the PKS/mFAS DH domain; that stretch reads HELLGRRTPD…TNMVGEQDAS (309 aa). H987 functions as the Proton acceptor; for dehydratase activity in the catalytic mechanism. Positions 1109 to 1263 are C-terminal hotdog fold; that stretch reads LVNIDGERVY…TNMVGEQDAS (155 aa). The active-site Proton donor; for dehydratase activity is D1168. The methyltransferase (MT) domain stretch occupies residues 1402-1601; sequence EDDMLDRFYM…FSGADTVMHD (200 aa). The ketoreductase (KR) domain stretch occupies residues 2136–2277; sequence KTYFMVGMAG…SVATVIGNIG (142 aa). In terms of domain architecture, Carrier 1 spans 2425 to 2502; that stretch reads EAVAAVVKAF…QVCTWATKKV (78 aa). S2462 is modified (O-(pantetheine 4'-phosphoryl)serine). Disordered regions lie at residues 2520–2583 and 2597–2621; these read AEKT…KLGT and DADA…NRPE. The segment covering 2530 to 2540 has biased composition (pro residues); that stretch reads APAPDAAPAPA. A condensation (C) domain region spans residues 2627-3054; sequence IMSQAQSRIW…HLDITECEIY (428 aa). The segment at 3088 to 3485 is adenylation (A) (KR) domain; the sequence is SLHSDKSAVK…GTLLCLGRLD (398 aa). Positions 3088 to 3485 are reductase (RED) domain; sequence SLHSDKSAVK…GTLLCLGRLD (398 aa). In terms of domain architecture, Carrier 2 spans 3596 to 3675; the sequence is EKMTIREGEV…EMARRIDEHQ (80 aa). S3635 carries the post-translational modification O-(pantetheine 4'-phosphoryl)serine.

It in the C-terminal section; belongs to the NRP synthetase family.

It carries out the reaction L-tyrosine + holo-[ACP] + 7 malonyl-CoA + acetyl-CoA + 8 AH2 + 2 S-adenosyl-L-methionine + ATP + 4 H(+) = N-[(4E,6E,10S,12Z,14E)-6,10-dimethyl-3-oxohexadeca-4,6,12,14-tetraenoyl]-L-tyrosyl-[ACP] + 8 A + AMP + 2 S-adenosyl-L-homocysteine + 7 CO2 + diphosphate + 8 CoA + 6 H2O. The protein operates within mycotoxin biosynthesis. In terms of biological role, hybrid PKS-NRPS synthetase; part of the gene cluster that mediates the biosynthesis of ilicicolin H, a 4-hydroxy-2-pyridonealkaloid that has potent and broad antifungal activities by inhibiting the mitochondrial respiration chain. IliA assembles the backbone of ilicicolin H. The PKS portion and trans-acting enoyl reductase iliB work together to construct an octaketide, and two methyl groups are introduced by the MT domain during the chain assembly. The nascent chain is then condensed with tyrosine, catalyzed by the C domain, and the resulting PKS-NRPS hybrid is offloaded by the RED domain to form an advanced tetramic acid intermediate. The biosynthesis of ilicicolin H starts with formation of the tetramic acid by the hybrid PKS-NRPS synthetase iliA with the partnering trans-enoyl reductase iliB since iliA lacks a designated enoylreductase (ER) domain. The cytochrome P450 monooxygenase iliC then catalyzes the ring expansion of the tetramate to the acyclic 2-pyridone. The pericyclase iliD further converts the acyclic 2-pyridone into 8-epi-ilicicolin H. 8-epi-ilicicolin H might then spontaneously convert to ilicicolin H, since ilicicolin H is produced in the absence of the epimerase iliE, in contrast to what was observed for the Talaromyces variabilis ilicolin H biosynthetic pathway. The protein is Hybrid PKS-NRPS synthetase iliA of Neonectria sp. (strain DH2).